Reading from the N-terminus, the 242-residue chain is tRNA pseudouridine synthase A (242 aa).

The active-site Nucleophile is aspartate 51. Residue tyrosine 107 participates in substrate binding.

Belongs to the tRNA pseudouridine synthase TruA family. As to quaternary structure, homodimer.

It catalyses the reaction uridine(38/39/40) in tRNA = pseudouridine(38/39/40) in tRNA. Formation of pseudouridine at positions 38, 39 and 40 in the anticodon stem and loop of transfer RNAs. This chain is tRNA pseudouridine synthase A, found in Helicobacter acinonychis (strain Sheeba).